We begin with the raw amino-acid sequence, 103 residues long: UPF0145 protein PBPRB0184 (103 aa).

The protein belongs to the UPF0145 family.

The chain is UPF0145 protein PBPRB0184 from Photobacterium profundum (strain SS9).